A 271-amino-acid chain; its full sequence is Formamidopyrimidine-DNA glycosylase (271 aa).

Residue proline 2 is the Schiff-base intermediate with DNA of the active site. The active-site Proton donor is the glutamate 3. Lysine 58 serves as the catalytic Proton donor; for beta-elimination activity. Positions 91, 110, and 152 each coordinate DNA. The FPG-type zinc-finger motif lies at 237 to 271 (RAYGRGGQPCTVCQTELKEIKLGQRTSVFCPSCQR). Arginine 261 functions as the Proton donor; for delta-elimination activity in the catalytic mechanism.

This sequence belongs to the FPG family. As to quaternary structure, monomer. Zn(2+) is required as a cofactor.

The enzyme catalyses Hydrolysis of DNA containing ring-opened 7-methylguanine residues, releasing 2,6-diamino-4-hydroxy-5-(N-methyl)formamidopyrimidine.. The catalysed reaction is 2'-deoxyribonucleotide-(2'-deoxyribose 5'-phosphate)-2'-deoxyribonucleotide-DNA = a 3'-end 2'-deoxyribonucleotide-(2,3-dehydro-2,3-deoxyribose 5'-phosphate)-DNA + a 5'-end 5'-phospho-2'-deoxyribonucleoside-DNA + H(+). Functionally, involved in base excision repair of DNA damaged by oxidation or by mutagenic agents. Acts as a DNA glycosylase that recognizes and removes damaged bases. Has a preference for oxidized purines, such as 7,8-dihydro-8-oxoguanine (8-oxoG). Has AP (apurinic/apyrimidinic) lyase activity and introduces nicks in the DNA strand. Cleaves the DNA backbone by beta-delta elimination to generate a single-strand break at the site of the removed base with both 3'- and 5'-phosphates. The sequence is that of Formamidopyrimidine-DNA glycosylase from Hahella chejuensis (strain KCTC 2396).